The chain runs to 432 residues: Enolase 1 (432 aa).

Glutamine 163 is a binding site for (2R)-2-phosphoglycerate. The active-site Proton donor is the glutamate 205. Residues aspartate 242, glutamate 287, and aspartate 314 each coordinate Mg(2+). The (2R)-2-phosphoglycerate site is built by lysine 339, arginine 368, serine 369, and lysine 390. The active-site Proton acceptor is the lysine 339.

The protein belongs to the enolase family. Mg(2+) serves as cofactor.

Its subcellular location is the cytoplasm. The protein localises to the secreted. It is found in the cell surface. The enzyme catalyses (2R)-2-phosphoglycerate = phosphoenolpyruvate + H2O. It participates in carbohydrate degradation; glycolysis; pyruvate from D-glyceraldehyde 3-phosphate: step 4/5. Catalyzes the reversible conversion of 2-phosphoglycerate (2-PG) into phosphoenolpyruvate (PEP). It is essential for the degradation of carbohydrates via glycolysis. In Lactobacillus johnsonii (strain CNCM I-12250 / La1 / NCC 533), this protein is Enolase 1.